A 416-amino-acid polypeptide reads, in one-letter code: Floricaula/leafy homolog 2 (416 aa).

The interval 154-237 (EGLSEEPVQQ…DASGGISERQ (84 aa)) is disordered. A compositionally biased stretch (acidic residues) spans 210–225 (AEEDEETEEGQEDDWN). DNA-binding regions lie at residues 238-242 (REHPF), 307-314 (NKPKMRHY), and 378-381 (YVPT).

It belongs to the FLO/LFY family. As to expression, expressed in floral meristems and in indeterminate vegetative meristems.

The protein localises to the nucleus. Probable transcription factor that act to specify determinacy in the progenitor cells for both flowers and leaves. This Nicotiana tabacum (Common tobacco) protein is Floricaula/leafy homolog 2 (FL2).